The primary structure comprises 128 residues: Nanos homolog 1 (128 aa).

The segment at 7–23 (FDSWSDYLGLSSLISRG) is essential for its translational repressor activity. Residues 25–52 (QPQREGERPRWDVLSPASAEPLPSNESV) are disordered. The Nanos-type zinc-finger motif lies at 56-110 (GCGFCRSNREALSLYTSHRLRALDGRVLCPVLRGYTCPLCGANGDWAHTMRYCPL). The Zn(2+) site is built by Cys-57, Cys-60, His-73, Cys-84, Cys-92, Cys-95, His-103, and Cys-108. Short sequence motifs (C2HC) lie at residues 57-84 (CGFC…RVLC) and 92-108 (CPLC…MRYC).

This sequence belongs to the nanos family. As to quaternary structure, interacts with ccnb1. In terms of tissue distribution, ovary and testis.

The protein localises to the cytoplasm. It is found in the perinuclear region. Acts as a translational repressor. Can mediate repression affecting different steps in the translation process: cap-driven, IRES-driven, polyadenylated RNAs or nonpolyadenylated RNAs. Essential for the development of primordial germ cells (PGCs) by ensuring their proper migration and survival. The protein is Nanos homolog 1 (nanos1) of Xenopus laevis (African clawed frog).